The primary structure comprises 468 residues: GDNF family receptor alpha-1 (468 aa).

The first 24 residues, 1–24, serve as a signal peptide directing secretion; the sequence is MFLATLYFVLPLLDLLMSAEVSGG. Tandem repeats lie at residues 25–113, 150–238, and 239–342. Cysteines 36 and 42 form a disulfide. Asn59 is a glycosylation site (N-linked (GlcNAc...) asparagine). 10 disulfide bridges follow: Cys154/Cys214, Cys161/Cys167, Cys178/Cys192, Cys187/Cys233, Cys216/Cys221, Cys243/Cys313, Cys250/Cys256, Cys267/Cys285, Cys277/Cys337, and Cys315/Cys325. N-linked (GlcNAc...) asparagine glycans are attached at residues Asn347 and Asn406. Ser430 carries GPI-anchor amidated serine lipidation. Residues 431–468 constitute a propeptide, removed in mature form; it reads HITTKSMAAPPSCGLSSLPVMVFTALAALLSVSLAETS.

It belongs to the GDNFR family. As to quaternary structure, interacts with GDNF ligand and RET: forms a 2:2:2 ternary complex composed of GDNF ligand, GFRA1 and RET receptor. Interacts with SORL1, either alone or in complex with GDNF. Interaction between SORL1 and GFRA1 leads to GFRA1 internalization, but not degradation. In terms of tissue distribution, expressed in the brain, in hippocampal neurons (at protein level). Isoform 1 and isoform 2 are expressed in heart, brain, lung, liver, kidney and testis.

The protein localises to the cell membrane. The protein resides in the golgi apparatus. It localises to the trans-Golgi network. It is found in the endosome. Its subcellular location is the multivesicular body. Functionally, coreceptor for GDNF, a neurotrophic factor that enhances survival and morphological differentiation of dopaminergic neurons and increases their high-affinity dopamine uptake. GDNF-binding leads to autophosphorylation and activation of the RET receptor. The polypeptide is GDNF family receptor alpha-1 (Gfra1) (Mus musculus (Mouse)).